We begin with the raw amino-acid sequence, 468 residues long: ATP synthase subunit beta (468 aa).

155 to 162 (GGAGVGKT) is an ATP binding site.

It belongs to the ATPase alpha/beta chains family. In terms of assembly, F-type ATPases have 2 components, CF(1) - the catalytic core - and CF(0) - the membrane proton channel. CF(1) has five subunits: alpha(3), beta(3), gamma(1), delta(1), epsilon(1). CF(0) has three main subunits: a(1), b(2) and c(9-12). The alpha and beta chains form an alternating ring which encloses part of the gamma chain. CF(1) is attached to CF(0) by a central stalk formed by the gamma and epsilon chains, while a peripheral stalk is formed by the delta and b chains.

Its subcellular location is the cell membrane. The enzyme catalyses ATP + H2O + 4 H(+)(in) = ADP + phosphate + 5 H(+)(out). Functionally, produces ATP from ADP in the presence of a proton gradient across the membrane. The catalytic sites are hosted primarily by the beta subunits. In Streptococcus mutans serotype c (strain ATCC 700610 / UA159), this protein is ATP synthase subunit beta.